We begin with the raw amino-acid sequence, 430 residues long: Methylthioribose kinase 1 (430 aa).

Residues 52–56, lysine 71, and 125–127 each bind ATP; these read DGNLN and RYI. Asparagine 56 is a binding site for substrate. Aspartate 246 is a substrate binding site. 263–265 is an ATP binding site; sequence DPE. Arginine 373 is a binding site for substrate.

It belongs to the methylthioribose kinase family. In terms of assembly, homodimer.

The catalysed reaction is 5-(methylsulfanyl)-D-ribose + ATP = 5-(methylsulfanyl)-alpha-D-ribose 1-phosphate + ADP + H(+). Its pathway is amino-acid biosynthesis; L-methionine biosynthesis via salvage pathway; S-methyl-5-thio-alpha-D-ribose 1-phosphate from S-methyl-5'-thioadenosine (hydrolase route): step 2/2. In terms of biological role, catalyzes the phosphorylation of methylthioribose into methylthioribose-1-phosphate. This is Methylthioribose kinase 1 from Oryza sativa subsp. japonica (Rice).